We begin with the raw amino-acid sequence, 115 residues long: Putative type I restriction enzyme MpnIIP endonuclease subunit middle part (115 aa).

The middle section of a putative type I restriction enzyme that if reconstituted might recognize 5'-GAN(7)TAY-3' and cleave a random distance away. Subunit R is required for both nuclease and ATPase activities, but not for modification. This chain is Putative type I restriction enzyme MpnIIP endonuclease subunit middle part, found in Mycoplasma pneumoniae (strain ATCC 29342 / M129 / Subtype 1) (Mycoplasmoides pneumoniae).